Consider the following 364-residue polypeptide: G-protein coupled receptor 4 (364 aa).

Over 1 to 8 (MCNVSQDS) the chain is Extracellular. Residue Asn-3 is glycosylated (N-linked (GlcNAc...) asparagine). Residues 9-45 (CNIDSRLDSLFPPTLYIFVMVIGFPTNCLSLWAAFVQ) traverse the membrane as a helical segment. 2 cysteine pairs are disulfide-bonded: Cys-9/Cys-258 and Cys-90/Cys-168. The Cytoplasmic segment spans residues 46–49 (VRQK). Residues 50 to 80 (NELGVYLLNLSISDLLYIATLPPWVNYFLHQ) form a helical membrane-spanning segment. Residues 81-85 (DNWIH) lie on the Extracellular side of the membrane. The helical transmembrane segment at 86-121 (GPESCKLFGFILYTNIYISIGFLSCISVDRYLAVAH) threads the bilayer. Over 122-129 (PLKFAKVR) the chain is Cytoplasmic. Residues 130–156 (RVKTAAVVSAVVWAIEIGANSAPLFHN) form a helical membrane-spanning segment. The Extracellular segment spans residues 157–172 (ELFEDRFNHTFCFEKY). The interval 157 to 172 (ELFEDRFNHTFCFEKY) is extracellular loop 2 (ECL2). A glycan (N-linked (GlcNAc...) asparagine) is linked at Asn-164. Residues 173 to 210 (PMEDWVAQMNLYRVFVGFLFPWVLMLFCYQGILRAVKT) traverse the membrane as a helical segment. Over 211 to 214 (NVST) the chain is Cytoplasmic. Residues 215 to 250 (EREEKAKIKRLALSLIAILLFCFAPYHLILLSRSVV) form a helical membrane-spanning segment. At 251–260 (YLGQPCDCTF) the chain is on the extracellular side. The chain crosses the membrane as a helical span at residues 261-289 (EENIFTAYHVSLALTSLNCVADPILYCLA). Over 290 to 364 (NEGARSEVTR…RVRRRRDCKC (75 aa)) the chain is Cytoplasmic.

Belongs to the G-protein coupled receptor 1 family.

The protein resides in the cell membrane. Activated by a network of residues that connects an extracellular-facing cavity to Glu-145, a conserved charged residue buried in the transmembrane core of the receptor. Protonation likely drives conformational changes in extracellular loop 2 (ECL2), which stabilizes movement of transmembrane 3 (TM3) and a series of rearrangements that connect the extracellular-facing cavity to Glu-145, a residue only conserved in proton-sensing G-protein coupled receptors. Proton-sensing G-protein coupled receptor activated by extracellular pH, which is required to monitor pH changes and generate adaptive reactions. Ligand binding causes a conformation change that triggers signaling via guanine nucleotide-binding proteins (G proteins) and modulates the activity of downstream effectors, such as adenylate cyclase. The protein is G-protein coupled receptor 4 of Callorhinchus milii (Ghost shark).